We begin with the raw amino-acid sequence, 208 residues long: Small ribosomal subunit protein uS4 (208 aa).

Positions 98–161 constitute an S4 RNA-binding domain; that stretch reads QRLDNLVYRM…KNNPQILRAV (64 aa).

This sequence belongs to the universal ribosomal protein uS4 family. As to quaternary structure, part of the 30S ribosomal subunit. Contacts protein S5. The interaction surface between S4 and S5 is involved in control of translational fidelity.

Its function is as follows. One of the primary rRNA binding proteins, it binds directly to 16S rRNA where it nucleates assembly of the body of the 30S subunit. Functionally, with S5 and S12 plays an important role in translational accuracy. The sequence is that of Small ribosomal subunit protein uS4 from Campylobacter hominis (strain ATCC BAA-381 / DSM 21671 / CCUG 45161 / LMG 19568 / NCTC 13146 / CH001A).